We begin with the raw amino-acid sequence, 246 residues long: Large ribosomal subunit protein uL3 (246 aa).

Residue Gln-151 is modified to N5-methylglutamine.

It belongs to the universal ribosomal protein uL3 family. In terms of assembly, part of the 50S ribosomal subunit. Forms a cluster with proteins L14 and L19. Methylated by PrmB.

Its function is as follows. One of the primary rRNA binding proteins, it binds directly near the 3'-end of the 23S rRNA, where it nucleates assembly of the 50S subunit. The chain is Large ribosomal subunit protein uL3 from Bartonella henselae (strain ATCC 49882 / DSM 28221 / CCUG 30454 / Houston 1) (Rochalimaea henselae).